Reading from the N-terminus, the 151-residue chain is Large ribosomal subunit protein eL8 (151 aa).

The protein belongs to the eukaryotic ribosomal protein eL8 family. As to quaternary structure, part of the 50S ribosomal subunit. Probably part of the RNase P complex.

Its subcellular location is the cytoplasm. Its function is as follows. Multifunctional RNA-binding protein that recognizes the K-turn motif in ribosomal RNA, the RNA component of RNase P, box H/ACA, box C/D and box C'/D' sRNAs. This Pyrobaculum aerophilum (strain ATCC 51768 / DSM 7523 / JCM 9630 / CIP 104966 / NBRC 100827 / IM2) protein is Large ribosomal subunit protein eL8.